The chain runs to 324 residues: Myb-like DNA-binding protein myb-1 (324 aa).

2 consecutive HTH myb-type domains span residues 4 to 59 (MPDQ…KPGL) and 60 to 110 (NHGP…NRKK). The segment at 107–231 (NRKKNQLRRQ…PTGSTLRLLT (125 aa)) is disordered. A compositionally biased stretch (polar residues) spans 155–165 (RRPSSPSSFND). Positions 166–175 (SLHHRVHESI) are enriched in basic and acidic residues. Low complexity-rich tracts occupy residues 183 to 192 (QQQQQQQQQQ) and 222 to 231 (PTGSTLRLLT).

It is found in the nucleus. This chain is Myb-like DNA-binding protein myb-1 (rca-1), found in Neurospora crassa (strain ATCC 24698 / 74-OR23-1A / CBS 708.71 / DSM 1257 / FGSC 987).